Consider the following 214-residue polypeptide: Riboflavin kinase (214 aa).

Positions 1–26 are disordered; that stretch reads MRPDGPRDPVVGPDSGPEPPYPVRLS. The Mg(2+) site is built by threonine 44 and asparagine 46. Glutamate 112 serves as the catalytic Nucleophile.

Belongs to the flavokinase family. Zn(2+) serves as cofactor. Mg(2+) is required as a cofactor.

The catalysed reaction is riboflavin + ATP = FMN + ADP + H(+). It participates in cofactor biosynthesis; FMN biosynthesis; FMN from riboflavin (ATP route): step 1/1. Catalyzes the phosphorylation of riboflavin (vitamin B2) to form flavin mononucleotide (FMN) coenzyme. The polypeptide is Riboflavin kinase (fmn1) (Aspergillus clavatus (strain ATCC 1007 / CBS 513.65 / DSM 816 / NCTC 3887 / NRRL 1 / QM 1276 / 107)).